Reading from the N-terminus, the 492-residue chain is Catalase isozyme B (492 aa).

The interval 1–20 is disordered; it reads MDPYKHRPSSGSNSTFWTTN. Positions 9-20 are enriched in polar residues; it reads SSGSNSTFWTTN. Position 62 (Arg62) interacts with heme. Residue His65 is part of the active site. Residue Arg102 participates in heme binding. The active site involves Asn138. Residue Phe151 participates in heme binding. Tyr210 bears the Phosphotyrosine mark. The segment at residues 325–348 is a cross-link (3-(S-cysteinyl)-tyrosine (Cys-Tyr)); that stretch reads CPAIIVPGIHYSDDKLLQTRIFSY. 3 residues coordinate heme: Arg344, Tyr348, and Arg355. Residues 484–492 carry the Peroxisome targeting signal motif; it reads SRLNLKPNM.

This sequence belongs to the catalase family. As to quaternary structure, homotetramer. Interacts with GLO1 and GLO4; these interactions are disturbed by alpha-hydroxy-2-pyridinemethanesulfonic acid (HPMS) and salicylic acid (SA). Interacts with STRK1 at the plasma membrane. Heme is required as a cofactor. Predominantly expressed in roots and, at low levels, in leaves (e.g. sheaths). Detected in seeds. Also present in panicles and culms. Observed in stems and anthers.

It is found in the peroxisome. The protein resides in the glyoxysome. Its subcellular location is the cell membrane. The catalysed reaction is 2 H2O2 = O2 + 2 H2O. Its activity is regulated as follows. Strongly inhibited by beta-mercaptoethanol, sodium azide and potassium cyanide. Slightly repressed by 3-amino-1,2,4-triazole (3-AT). Activity is repressed proportionally to increased concentration of NaCl, KCl, LiCl and MgCl(2). Functionally, occurs in almost all aerobically respiring organisms and serves to protect cells from the toxic effects of hydrogen peroxide. May prevent the excessive accumulation of H(2)O(2) during water stress in response to the accumulation of abscisic acid (ABA). Involved in the modulation of ROS levels related to root growth regulation. Required for pollen viability and floret fertility upon heat stress (HS) by detoxifying reactive oxygen species (ROS) and malondialdehyde (MDA) accumulation in developing anthers exposed to HS. In Oryza sativa subsp. japonica (Rice), this protein is Catalase isozyme B (CATB).